The following is a 552-amino-acid chain: FERRY endosomal RAB5 effector complex subunit 3 (552 aa).

A Phosphoserine modification is found at serine 79.

Component of the FERRY complex composed of five subunits, TBCK, PPP1R21, FERRY3, CRYZL1 and GATD1 with a ratio of 1:2:1:2:4, respectively.

It is found in the cytoplasm. The protein localises to the early endosome. In terms of biological role, component of the FERRY complex (Five-subunit Endosomal Rab5 and RNA/ribosome intermediary). The FERRY complex directly interacts with mRNAs and RAB5A, and functions as a RAB5A effector involved in the localization and the distribution of specific mRNAs most likely by mediating their endosomal transport. The complex recruits mRNAs and ribosomes to early endosomes through direct mRNA-interaction. Plays a role in mast cell degranulation. This is FERRY endosomal RAB5 effector complex subunit 3 from Rattus norvegicus (Rat).